The primary structure comprises 155 residues: Transcriptional repressor NrdR (155 aa).

A zinc finger lies at 3–34 (CPNCHQNASRVIDSRPTDEGRTIRRRRECENC). The region spanning 49–139 (LLVIKNDGTR…IYRQFTDMSS (91 aa)) is the ATP-cone domain.

Belongs to the NrdR family. Requires Zn(2+) as cofactor.

Negatively regulates transcription of bacterial ribonucleotide reductase nrd genes and operons by binding to NrdR-boxes. The chain is Transcriptional repressor NrdR from Lactobacillus delbrueckii subsp. bulgaricus (strain ATCC 11842 / DSM 20081 / BCRC 10696 / JCM 1002 / NBRC 13953 / NCIMB 11778 / NCTC 12712 / WDCM 00102 / Lb 14).